A 150-amino-acid chain; its full sequence is Macrodomain Ter protein (150 aa).

It belongs to the MatP family. Homodimer.

The protein resides in the cytoplasm. In terms of biological role, required for spatial organization of the terminus region of the chromosome (Ter macrodomain) during the cell cycle. Prevents early segregation of duplicated Ter macrodomains during cell division. Binds specifically to matS, which is a 13 bp signature motif repeated within the Ter macrodomain. The protein is Macrodomain Ter protein of Escherichia coli (strain SMS-3-5 / SECEC).